We begin with the raw amino-acid sequence, 326 residues long: Phospho-N-acetylmuramoyl-pentapeptide-transferase (326 aa).

A run of 10 helical transmembrane segments spans residues 5–25, 51–71, 82–102, 122–142, 148–168, 180–200, 204–224, 229–249, 252–272, and 304–324; these read GLLI…PIFI, TPTM…LIMA, VWLL…DDFI, IIIA…TVIY, LQFD…VGAS, LLAG…WYGI, VVAV…VFNA, VFMG…ISIL, LEIL…SVII, and VVTT…YIEV.

This sequence belongs to the glycosyltransferase 4 family. MraY subfamily. Requires Mg(2+) as cofactor.

Its subcellular location is the cell membrane. It carries out the reaction UDP-N-acetyl-alpha-D-muramoyl-L-alanyl-gamma-D-glutamyl-meso-2,6-diaminopimeloyl-D-alanyl-D-alanine + di-trans,octa-cis-undecaprenyl phosphate = di-trans,octa-cis-undecaprenyl diphospho-N-acetyl-alpha-D-muramoyl-L-alanyl-D-glutamyl-meso-2,6-diaminopimeloyl-D-alanyl-D-alanine + UMP. It participates in cell wall biogenesis; peptidoglycan biosynthesis. Its function is as follows. Catalyzes the initial step of the lipid cycle reactions in the biosynthesis of the cell wall peptidoglycan: transfers peptidoglycan precursor phospho-MurNAc-pentapeptide from UDP-MurNAc-pentapeptide onto the lipid carrier undecaprenyl phosphate, yielding undecaprenyl-pyrophosphoryl-MurNAc-pentapeptide, known as lipid I. This chain is Phospho-N-acetylmuramoyl-pentapeptide-transferase, found in Oceanobacillus iheyensis (strain DSM 14371 / CIP 107618 / JCM 11309 / KCTC 3954 / HTE831).